We begin with the raw amino-acid sequence, 396 residues long: Proton-coupled antiporter flippase LtaA (396 aa).

12 consecutive transmembrane segments (helical) span residues 15–34 (FILM…MYIL), 46–73 (IAVA…GFLL), 80–99 (IVLT…VIWF), 105–126 (VIIF…IMLS), 138–159 (GYVY…NLLI), 165–184 (RFAF…YYFV), 211–231 (LLLF…VPIL), 243–264 (TIEY…MLFL), 276–298 (MYGV…SMIV), 304–326 (WIIA…TFMA), 338–358 (WGVF…FGGL), and 370–390 (FYFS…YFIA).

This sequence belongs to the major facilitator superfamily. LtaA family.

Its subcellular location is the cell membrane. The protein operates within cell wall biogenesis; lipoteichoic acid biosynthesis. Its function is as follows. Proton-coupled antiporter flippase that catalyzes the translocation, from the inner to the outer leaflet of the cell membrane, of the lipid-linked disaccharide (anchor-LLD) that anchors lipoteichoic acids (LTA) to the cell membrane. This chain is Proton-coupled antiporter flippase LtaA (ltaA), found in Staphylococcus aureus (strain MRSA252).